The sequence spans 173 residues: Ribosome maturation factor RimM (173 aa).

Residues 95–169 (EGSYYFKDIL…RIEVTLLEGL (75 aa)) form the PRC barrel domain.

Belongs to the RimM family. As to quaternary structure, binds ribosomal protein uS19.

The protein resides in the cytoplasm. In terms of biological role, an accessory protein needed during the final step in the assembly of 30S ribosomal subunit, possibly for assembly of the head region. Essential for efficient processing of 16S rRNA. May be needed both before and after RbfA during the maturation of 16S rRNA. It has affinity for free ribosomal 30S subunits but not for 70S ribosomes. This is Ribosome maturation factor RimM from Lactobacillus johnsonii (strain CNCM I-12250 / La1 / NCC 533).